Reading from the N-terminus, the 153-residue chain is Ubiquitin-conjugating enzyme E2 ubc-18 (153 aa).

A UBC core domain is found at 2–149 (SATRRLQKEL…AEEHTRKHAE (148 aa)). Residue C86 is the Glycyl thioester intermediate of the active site.

It belongs to the ubiquitin-conjugating enzyme family. In terms of assembly, interacts with E3 ubiquitin-protein ligase wwp-1. Interacts with RBR-type E3 ubiquitin transferase ari-1.1. Expressed in neurons localized in the head and tail of adults.

The catalysed reaction is S-ubiquitinyl-[E1 ubiquitin-activating enzyme]-L-cysteine + [E2 ubiquitin-conjugating enzyme]-L-cysteine = [E1 ubiquitin-activating enzyme]-L-cysteine + S-ubiquitinyl-[E2 ubiquitin-conjugating enzyme]-L-cysteine.. Ubiquitin-conjugating enzyme E2. Accepts ubiquitin from the E1 complex and catalyzes its covalent attachment to other proteins. Required for diet restriction-mediated lifespan extension, probably acting as part of a complex with ubiquitin-protein ligase wwp-1. Acts redundantly with lin-35/Rb in the regulation of pharyngeal morphogenesis during embryonic development by negatively regulating the expression of proteins such as sup-35. The polypeptide is Ubiquitin-conjugating enzyme E2 ubc-18 (Caenorhabditis elegans).